Consider the following 105-residue polypeptide: Large ribosomal subunit protein uL24 (105 aa).

It belongs to the universal ribosomal protein uL24 family. Part of the 50S ribosomal subunit.

One of two assembly initiator proteins, it binds directly to the 5'-end of the 23S rRNA, where it nucleates assembly of the 50S subunit. Functionally, one of the proteins that surrounds the polypeptide exit tunnel on the outside of the subunit. The protein is Large ribosomal subunit protein uL24 of Cellvibrio japonicus (strain Ueda107) (Pseudomonas fluorescens subsp. cellulosa).